We begin with the raw amino-acid sequence, 318 residues long: Transcription factor zip-4 (318 aa).

Positions 1 to 13 (MYNYNYSRGNKSM) are enriched in polar residues. Disordered regions lie at residues 1–20 (MYNY…PRFH), 147–205 (EKKP…TAAA), 238–257 (NNDA…LQKD), and 273–318 (ELQS…KSNY). A compositionally biased stretch (acidic residues) spans 173-190 (DYQEEGETSLSDNDESVD). In terms of domain architecture, bZIP spans 228-291 (EPIYKLKRAR…ERDQQLIKQL (64 aa)). The basic motif stretch occupies residues 232–266 (KLKRARNNDAVRKSRNKAKELQLQKDEEYDEMKKR). Residues 242–280 (VRKSRNKAKELQLQKDEEYDEMKKRITQLEAELQSEREG) are a coiled coil. Positions 267-274 (ITQLEAEL) are leucine-zipper. Positions 275-298 (QSEREGRERDQQLIKQLIREKEST) are enriched in basic and acidic residues. Residues 307–318 (RNALESFNKSNY) show a composition bias toward polar residues.

It belongs to the bZIP family. C/EBP subfamily.

It localises to the nucleus. Transcription factor that binds to the promoter and the enhancer regions of target genes. Involved in responding to mitochondrial damage. Has a protective role in response to infection by the Gram-negative bacterium P.aeruginosa. The sequence is that of Transcription factor zip-4 from Caenorhabditis elegans.